A 104-amino-acid chain; its full sequence is 2,4-dinitrotoluene dioxygenase system, ferredoxin component (104 aa).

The interval 1–21 (MSENWIDAAARDEVPRGRRDR) is disordered. The Rieske domain maps to 5–101 (WIDAAARDEV…VKIENMRVML (97 aa)). Positions 45, 47, 64, and 67 each coordinate [2Fe-2S] cluster.

The protein belongs to the bacterial ring-hydroxylating dioxygenase ferredoxin component family. In terms of assembly, the 2,4-dinitrotoluene dioxygenase (DNTDO) multicomponent enzyme system is composed of an electron transfer component and a dioxygenase component (iron sulfur protein (ISP)). The electron transfer component is composed of a ferredoxin reductase (DntAa) and a ferredoxin (DntAb), and the dioxygenase component is formed of a large alpha subunit (DntAc) and a small beta subunit (DntAd). Requires [2Fe-2S] cluster as cofactor.

Functionally, component of the 2,4-dinitrotoluene dioxygenase (DNTDO) multicomponent enzyme system which catalyzes the incorporation of both atoms of molecular oxygen into 2,4-dinitrotoluene (DNT) to form 4-methyl-5-nitrocatechol (MNC) and nitrite. Functions as an intermediate electron transfer protein via a specific interaction with iron sulfur protein components (ISP)(DntAc and DntAd). Also able to convert naphthalene to cis-(1R,2S)-dihydroxy-1,2-dihydronaphthalene. The chain is 2,4-dinitrotoluene dioxygenase system, ferredoxin component from Burkholderia sp. (strain RASC).